The chain runs to 170 residues: Ubiquitin-conjugating enzyme E2 G1 (170 aa).

Met1 carries the post-translational modification N-acetylmethionine. Position 2 is an N-acetylthreonine; in Ubiquitin-conjugating enzyme E2 G1, N-terminally processed (Thr2). In terms of domain architecture, UBC core spans 5-166 (QSALLLRRQL…VARCVRKSQE (162 aa)). The active-site Glycyl thioester intermediate is the Cys90.

Belongs to the ubiquitin-conjugating enzyme family. In terms of processing, autoubiquitinated.

It carries out the reaction S-ubiquitinyl-[E1 ubiquitin-activating enzyme]-L-cysteine + [E2 ubiquitin-conjugating enzyme]-L-cysteine = [E1 ubiquitin-activating enzyme]-L-cysteine + S-ubiquitinyl-[E2 ubiquitin-conjugating enzyme]-L-cysteine.. It participates in protein modification; protein ubiquitination. In terms of biological role, accepts ubiquitin from the E1 complex and catalyzes its covalent attachment to other proteins. In vitro catalyzes 'Lys-48'-, as well as 'Lys-63'-linked polyubiquitination. May be involved in degradation of muscle-specific proteins. Mediates polyubiquitination of CYP3A4. This chain is Ubiquitin-conjugating enzyme E2 G1 (UBE2G1), found in Macaca fascicularis (Crab-eating macaque).